Consider the following 87-residue polypeptide: Small ribosomal subunit protein bS20 (87 aa).

Basic residues predominate over residues 1 to 11; it reads MANHKSALKRI. Residues 1–23 form a disordered region; the sequence is MANHKSALKRIKQTEKRTERNRH.

This sequence belongs to the bacterial ribosomal protein bS20 family.

Its function is as follows. Binds directly to 16S ribosomal RNA. The polypeptide is Small ribosomal subunit protein bS20 (Geotalea uraniireducens (strain Rf4) (Geobacter uraniireducens)).